The primary structure comprises 155 residues: Small ribosomal subunit protein uS7cz/uS7cy (155 aa).

This sequence belongs to the universal ribosomal protein uS7 family. As to quaternary structure, part of the 30S ribosomal subunit.

Its subcellular location is the plastid. The protein localises to the chloroplast. One of the primary rRNA binding proteins, it binds directly to 16S rRNA where it nucleates assembly of the head domain of the 30S subunit. The protein is Small ribosomal subunit protein uS7cz/uS7cy (rps7-A) of Jasminum nudiflorum (Winter jasmine).